The following is a 333-amino-acid chain: Type II restriction enzyme XcyI (333 aa).

It belongs to the XcyI type II restriction endonuclease family. As to quaternary structure, monomer. Requires Mg(2+) as cofactor.

The enzyme catalyses Endonucleolytic cleavage of DNA to give specific double-stranded fragments with terminal 5'-phosphates.. Functionally, a P subtype restriction enzyme that recognizes the double-stranded sequence 5'-CCCGGG-3' and cleaves after C-1. The polypeptide is Type II restriction enzyme XcyI (xcyIR) (Xanthomonas campestris pv. cyanopsidis).